The sequence spans 407 residues: Serine/threonine transporter SstT (407 aa).

Helical transmembrane passes span 12-32, 42-62, 81-101, 141-161, 179-199, 218-238, 245-267, 288-308, and 330-350; these read GNLI…GISS, LGIL…FILI, IIIL…LANF, ALSS…GIAL, VLKI…GLVA, ILLV…IVFF, FPLI…SSAA, ISIP…IAIL, and IIAT…LLLI.

It belongs to the dicarboxylate/amino acid:cation symporter (DAACS) (TC 2.A.23) family.

It localises to the cell inner membrane. The catalysed reaction is L-serine(in) + Na(+)(in) = L-serine(out) + Na(+)(out). It catalyses the reaction L-threonine(in) + Na(+)(in) = L-threonine(out) + Na(+)(out). Functionally, involved in the import of serine and threonine into the cell, with the concomitant import of sodium (symport system). The polypeptide is Serine/threonine transporter SstT (Campylobacter jejuni subsp. jejuni serotype O:2 (strain ATCC 700819 / NCTC 11168)).